We begin with the raw amino-acid sequence, 435 residues long: Ras association domain-containing protein 9 (435 aa).

Residues 1 to 22 (MAPFGRNLLKTRHKNRSPTKDM) are disordered. In terms of domain architecture, Ras-associating spans 25–119 (EEKEIVVWVC…MQFVLVKTDA (95 aa)). Residues 195 to 291 (HTIHQQVQRM…KLSAEIEREV (97 aa)) are a coiled coil. Positions 371–423 (SKDGCQGKENRGKEAEASSSNGEIPPLTQRVFNTYTNDTDSDTGISSNHSQDS) are disordered. The segment covering 375 to 386 (CQGKENRGKEAE) has biased composition (basic and acidic residues). Over residues 400 to 423 (RVFNTYTNDTDSDTGISSNHSQDS) the composition is skewed to polar residues.

As to quaternary structure, interacts with PAM. As to expression, testis, kidney, skeletal muscle, liver, lung, brain, heart, pituitary gland, adrenal gland and ovary.

Its subcellular location is the endosome. Functionally, may play a role in regulating vesicuar trafficking in cells. The protein is Ras association domain-containing protein 9 (Rassf9) of Rattus norvegicus (Rat).